Here is a 911-residue protein sequence, read N- to C-terminus: Protein translocase subunit SecA (911 aa).

Residues glutamine 86, 104–108 (GEGKT), and aspartate 494 each bind ATP. The tract at residues 856 to 911 (VEGIDAPQRPAQLRFTGPSEDGQSAVTRSGTDSGATVAAGTNRRSRRQAERRGRRG) is disordered. Residues 876-889 (DGQSAVTRSGTDSG) show a composition bias toward polar residues. Over residues 902 to 911 (RQAERRGRRG) the composition is skewed to basic and acidic residues.

Belongs to the SecA family. In terms of assembly, monomer and homodimer. Part of the essential Sec protein translocation apparatus which comprises SecA, SecYEG and auxiliary proteins SecDF. Other proteins may also be involved.

It is found in the cell membrane. Its subcellular location is the cytoplasm. It catalyses the reaction ATP + H2O + cellular proteinSide 1 = ADP + phosphate + cellular proteinSide 2.. Part of the Sec protein translocase complex. Interacts with the SecYEG preprotein conducting channel. Has a central role in coupling the hydrolysis of ATP to the transfer of proteins into and across the cell membrane, serving as an ATP-driven molecular motor driving the stepwise translocation of polypeptide chains across the membrane. This Micrococcus luteus (strain ATCC 4698 / DSM 20030 / JCM 1464 / CCM 169 / CCUG 5858 / IAM 1056 / NBRC 3333 / NCIMB 9278 / NCTC 2665 / VKM Ac-2230) (Micrococcus lysodeikticus) protein is Protein translocase subunit SecA.